Reading from the N-terminus, the 71-residue chain is Ubiquinol-cytochrome c reductase complex assembly factor 6 (71 aa).

Residues M1 to S8 lie on the Mitochondrial matrix side of the membrane. The chain crosses the membrane as a helical; Signal-anchor for type II membrane protein span at residues T9–A25. Residues E26 to K71 lie on the Mitochondrial intermembrane side of the membrane.

It belongs to the UQCC6 family. Interacts with UQCRC1. Interacts with UQCRQ. Interacts with UQCC5. Forms a complex, named COMB/coordinator of mitochondrial CYTB biogenesis, composed of UQCC1, UQCC2, UQCC4, UQCC5 and UQCC6; stabilizes nascent cytochrome b/MT-CYB and promotes its membrane insertion. Forms a complex, named COMA, composed of UQCC1, UQCC2 and UQCC4; activates MT-CYB translation. Forms a complex, named COMC, composed of UQCC1, UQCC2; UQCC3 and UQCC4; mediates MT-CYB hemylation and association with the first nuclear-encoded complex III subunit UQCRQ. Interacts with MT-CYB. Cardiac and skeletal muscle (at protein level).

The protein resides in the mitochondrion inner membrane. Required for the assembly and stability of the mitochondrial ubiquinol-cytochrome c reductase complex (complex III (CIII) or cytochrome b-c1 complex), a multisubunit transmembrane complex that is part of the mitochondrial electron transport chain (ETC) which drives oxidative phosphorylation. Mediates early complex III biogenesis. Participates in regulating the levels of electron transport chain proteins, and therefore energy supply, in response to changes in energy demand. Also required for cytochrome c oxidase complex (complex IV) assembly. The chain is Ubiquinol-cytochrome c reductase complex assembly factor 6 from Homo sapiens (Human).